Consider the following 886-residue polypeptide: UPF0592 membrane protein C7D4.03c (886 aa).

The disordered stretch occupies residues 87–112 (ILNEPYNESPSSSSSDSSSRSTSPFS). Residues 95 to 112 (SPSSSSSDSSSRSTSPFS) show a composition bias toward low complexity. 3 helical membrane passes run 277-297 (FCAS…DHFL), 374-394 (GGFF…QFSF), and 400-420 (VIYF…LTIS).

It belongs to the UPF0592 family.

The protein resides in the membrane. This chain is UPF0592 membrane protein C7D4.03c, found in Schizosaccharomyces pombe (strain 972 / ATCC 24843) (Fission yeast).